The sequence spans 376 residues: UPF0754 membrane protein SE_1527 (376 aa).

2 helical membrane passes run 4-24 (ILLV…TNMI) and 356-376 (TLGF…AIFV).

It belongs to the UPF0754 family.

It is found in the cell membrane. In Staphylococcus epidermidis (strain ATCC 12228 / FDA PCI 1200), this protein is UPF0754 membrane protein SE_1527.